Consider the following 247-residue polypeptide: Complement C1q subcomponent subunit B (247 aa).

The N-terminal stretch at 1–22 (MKTPRGSVLVLLLLNLLRVSWA) is a signal peptide. Position 23 is a pyrrolidone carboxylic acid (Gln-23). Pro-29, Pro-32, Pro-35, Pro-47, and Pro-50 each carry 4-hydroxyproline. A disordered region spans residues 30–78 (SIPGIPGIPGKPGSDGKPGTPGTKGEKGLPGLVSHLNENGEKGDPGFPG). Positions 39 to 98 (GKPGSDGKPGTPGTKGEKGLPGLVSHLNENGEKGDPGFPGMPGKVGPKGPIGPKGVPGPP) constitute a Collagen-like domain. Residues 40 to 52 (KPGSDGKPGTPGT) show a composition bias toward low complexity. 5-hydroxylysine is present on residues Lys-53 and Lys-56. Pro-59 is subject to 4-hydroxyproline. 5-hydroxylysine is present on Lys-71. 4-hydroxyproline occurs at positions 77 and 80. 5-hydroxylysine is present on residues Lys-86 and Lys-92. 4-hydroxyproline is present on residues Pro-95 and Pro-98. A 5-hydroxylysine modification is found at Lys-104. The C1q domain occupies 111–247 (KATQKIAFSA…GFMLFPDTEA (137 aa)). The cysteines at positions 175 and 192 are disulfide-linked. Asp-193, Tyr-194, and Gln-200 together coordinate Ca(2+).

In terms of assembly, core component of the complement C1 complex, a calcium-dependent complex composed of 1 molecule of the C1Q subcomplex, 2 molecules of C1R and 2 molecules of C1S. The C1Q subcomplex is composed 18 subunits: 3 chains of C1QA, C1QB, and C1QC trimerize to form 6 collagen-like triple helices connected to six globular ligand-recognition modules (C1q domain). In terms of processing, hydroxylated on lysine and proline residues. Hydroxylated lysine residues can be glycosylated. Bovine C1Q contains up to 66.3 hydroxylysine-galactosylglucose residues. Total percentage hydroxylysine residues glycosylated is 92.0%. Contains no hydroxylysine-monosaccharides.

The protein localises to the secreted. The protein resides in the cell surface. With respect to regulation, the C1Q subcomplex is inhibited by sulfated molecules, such as triterpenoid sulfates, heparan sulfate, or chondroitin sulfates. Functionally, core component of the complement C1 complex, a multiprotein complex that initiates the classical pathway of the complement system, a cascade of proteins that leads to phagocytosis and breakdown of pathogens and signaling that strengthens the adaptive immune system. The classical complement pathway is initiated by the C1Q subcomplex of the C1 complex, which specifically binds IgG or IgM immunoglobulins complexed with antigens, forming antigen-antibody complexes on the surface of pathogens: C1QA, together with C1QB and C1QC, specifically recognizes and binds the Fc regions of IgG or IgM via its C1q domain. Immunoglobulin-binding activates the proenzyme C1R, which cleaves C1S, initiating the proteolytic cascade of the complement system. The C1Q subcomplex is activated by a hexamer of IgG complexed with antigens, while it is activated by a pentameric IgM. The C1Q subcomplex also recognizes and binds phosphatidylserine exposed on the surface of cells undergoing programmed cell death, possibly promoting activation of the complement system. The sequence is that of Complement C1q subcomponent subunit B (C1QB) from Bos taurus (Bovine).